We begin with the raw amino-acid sequence, 67 residues long: Conotoxin TsMMSK-011 (67 aa).

The first 22 residues, 1–22 (MMSKLGVLLTICLLLFPLTVLP), serve as a signal peptide directing secretion. Residues 23–50 (MDGDQPADLPALRTQDIATDQSPWFDPV) constitute a propeptide that is removed on maturation. 3 disulfides stabilise this stretch: cysteine 53/cysteine 65, cysteine 54/cysteine 61, and cysteine 58/cysteine 64. Proline 63 carries the 4-hydroxyproline modification.

It belongs to the conotoxin M superfamily. As to expression, expressed by the venom duct.

Its subcellular location is the secreted. In Conus tessulatus (Tessellate cone), this protein is Conotoxin TsMMSK-011.